The following is a 411-amino-acid chain: Thyroxine-binding globulin (411 aa).

The N-terminal stretch at 1-15 is a signal peptide; it reads MPLFSLVLLILGLHC. 4 N-linked (GlcNAc...) asparagine glycosylation sites follow: N34, N97, N163, and N251. Residues N291 and K394 each coordinate thyroxine.

This sequence belongs to the serpin family. As to expression, expressed by the liver and secreted in plasma.

The protein localises to the secreted. Functionally, major thyroid hormone transport protein in serum. In Bos taurus (Bovine), this protein is Thyroxine-binding globulin (SERPINA7).